Reading from the N-terminus, the 395-residue chain is Trans-2-enoyl-CoA reductase [NADH] (395 aa).

Residues 47 to 52 (GASTGY), 73 to 74 (FE), 110 to 111 (DA), and 138 to 139 (LA) each bind NAD(+). Residue Y224 coordinates substrate. The Proton donor role is filled by Y234. NAD(+) contacts are provided by residues K243 and 272-274 (VVT).

It belongs to the TER reductase family. As to quaternary structure, monomer.

The enzyme catalyses a 2,3-saturated acyl-CoA + NAD(+) = a (2E)-enoyl-CoA + NADH + H(+). The protein operates within lipid metabolism; fatty acid biosynthesis. Its function is as follows. Involved in the fatty acid synthesis (FAS II). Catalyzes the reduction of a carbon-carbon double bond in an enoyl moiety that is covalently linked to a coenzyme A (CoA). This Ruminiclostridium cellulolyticum (strain ATCC 35319 / DSM 5812 / JCM 6584 / H10) (Clostridium cellulolyticum) protein is Trans-2-enoyl-CoA reductase [NADH].